The primary structure comprises 110 residues: Acylphosphatase (110 aa).

An Acylphosphatase-like domain is found at 20–108 (RAHIFVRGKV…GEFNDFSILP (89 aa)). Catalysis depends on residues arginine 35 and asparagine 53.

It belongs to the acylphosphatase family.

It catalyses the reaction an acyl phosphate + H2O = a carboxylate + phosphate + H(+). The protein is Acylphosphatase (acyP) of Pyrobaculum calidifontis (strain DSM 21063 / JCM 11548 / VA1).